A 306-amino-acid chain; its full sequence is D-alanine--D-alanine ligase (306 aa).

Catalysis depends on residues glutamate 15 and serine 150. Residues 101–303 (KLLWKSLSLR…FDELILKILK (203 aa)) enclose the ATP-grasp domain. 134–189 (ILKLKFPVVIKPNNAGSSIGITIVNHPDLLIDSINLAFNYSNNIIIEKFLKGTEYT) lines the ATP pocket. Mg(2+)-binding residues include aspartate 257, glutamate 270, and asparagine 272. Serine 281 is a catalytic residue.

Belongs to the D-alanine--D-alanine ligase family. Requires Mg(2+) as cofactor. Mn(2+) is required as a cofactor.

The protein localises to the cytoplasm. The catalysed reaction is 2 D-alanine + ATP = D-alanyl-D-alanine + ADP + phosphate + H(+). Its pathway is cell wall biogenesis; peptidoglycan biosynthesis. Functionally, cell wall formation. This is D-alanine--D-alanine ligase from Buchnera aphidicola subsp. Schizaphis graminum (strain Sg).